Reading from the N-terminus, the 156-residue chain is 6,7-dimethyl-8-ribityllumazine synthase (156 aa).

5-amino-6-(D-ribitylamino)uracil contacts are provided by residues Phe-23, 57–59 (AFE), and 81–83 (AVI). Position 86–87 (86–87 (ST)) interacts with (2S)-2-hydroxy-3-oxobutyl phosphate. The active-site Proton donor is the His-89. Phe-114 is a binding site for 5-amino-6-(D-ribitylamino)uracil. Residue Arg-128 coordinates (2S)-2-hydroxy-3-oxobutyl phosphate.

The protein belongs to the DMRL synthase family.

The catalysed reaction is (2S)-2-hydroxy-3-oxobutyl phosphate + 5-amino-6-(D-ribitylamino)uracil = 6,7-dimethyl-8-(1-D-ribityl)lumazine + phosphate + 2 H2O + H(+). It participates in cofactor biosynthesis; riboflavin biosynthesis; riboflavin from 2-hydroxy-3-oxobutyl phosphate and 5-amino-6-(D-ribitylamino)uracil: step 1/2. In terms of biological role, catalyzes the formation of 6,7-dimethyl-8-ribityllumazine by condensation of 5-amino-6-(D-ribitylamino)uracil with 3,4-dihydroxy-2-butanone 4-phosphate. This is the penultimate step in the biosynthesis of riboflavin. The polypeptide is 6,7-dimethyl-8-ribityllumazine synthase (Brachyspira hyodysenteriae (strain ATCC 49526 / WA1)).